Reading from the N-terminus, the 215-residue chain is Orotate phosphoribosyltransferase (215 aa).

A 5-phospho-alpha-D-ribose 1-diphosphate-binding site is contributed by lysine 26. Position 34 to 35 (34 to 35 (FF)) interacts with orotate. Residues 72 to 73 (YK), arginine 99, lysine 100, lysine 103, histidine 105, and 124 to 132 (DDVITAGTA) contribute to the 5-phospho-alpha-D-ribose 1-diphosphate site. Residues threonine 128 and arginine 156 each coordinate orotate.

It belongs to the purine/pyrimidine phosphoribosyltransferase family. PyrE subfamily. Homodimer. Mg(2+) serves as cofactor.

The enzyme catalyses orotidine 5'-phosphate + diphosphate = orotate + 5-phospho-alpha-D-ribose 1-diphosphate. The protein operates within pyrimidine metabolism; UMP biosynthesis via de novo pathway; UMP from orotate: step 1/2. Functionally, catalyzes the transfer of a ribosyl phosphate group from 5-phosphoribose 1-diphosphate to orotate, leading to the formation of orotidine monophosphate (OMP). The sequence is that of Orotate phosphoribosyltransferase from Yersinia pseudotuberculosis serotype O:1b (strain IP 31758).